A 163-amino-acid polypeptide reads, in one-letter code: Globin CTT-Z (163 aa).

Positions 1 to 16 are cleaved as a signal peptide; that stretch reads MKFFAVLALCIVGAIA. In terms of domain architecture, Globin spans 18-162; sequence PLTSDEAALV…VYTAVFQIVT (145 aa). Heme b contacts are provided by His-76 and His-111.

Belongs to the globin family.

The polypeptide is Globin CTT-Z (CTT-Z) (Chironomus thummi thummi (Midge)).